A 107-amino-acid chain; its full sequence is Phosphoribosyl-ATP pyrophosphatase (107 aa).

The protein belongs to the PRA-PH family.

The protein resides in the cytoplasm. It catalyses the reaction 1-(5-phospho-beta-D-ribosyl)-ATP + H2O = 1-(5-phospho-beta-D-ribosyl)-5'-AMP + diphosphate + H(+). It participates in amino-acid biosynthesis; L-histidine biosynthesis; L-histidine from 5-phospho-alpha-D-ribose 1-diphosphate: step 2/9. In Bacillus thuringiensis (strain Al Hakam), this protein is Phosphoribosyl-ATP pyrophosphatase.